A 76-amino-acid chain; its full sequence is Dermaseptin-S7 (76 aa).

The N-terminal stretch at 1 to 22 is a signal peptide; sequence MDILKKSLFLVLFLGLISLSFC. Residues 23 to 45 constitute a propeptide that is removed on maturation; it reads EEEKRENEDEEEQEDDEQSEEKR. Residues 25-45 are disordered; it reads EKRENEDEEEQEDDEQSEEKR. Residues 30-41 are compositionally biased toward acidic residues; sequence EDEEEQEDDEQS. Glutamine amide is present on glutamine 73. Positions 75–76 are excised as a propeptide; that stretch reads EQ.

This sequence belongs to the frog skin active peptide (FSAP) family. Dermaseptin subfamily. Expressed by the skin glands.

It is found in the secreted. Antimicrobial peptide. This Phyllomedusa sauvagei (Sauvage's leaf frog) protein is Dermaseptin-S7.